A 274-amino-acid chain; its full sequence is Large ribosomal subunit protein uL2 (274 aa).

Residues 224-259 form a disordered region; it reads AMNPVDHPHGGGEGRTSGGRHPVTPWGIPTKGYKTR.

Belongs to the universal ribosomal protein uL2 family. As to quaternary structure, part of the 50S ribosomal subunit. Forms a bridge to the 30S subunit in the 70S ribosome.

In terms of biological role, one of the primary rRNA binding proteins. Required for association of the 30S and 50S subunits to form the 70S ribosome, for tRNA binding and peptide bond formation. It has been suggested to have peptidyltransferase activity; this is somewhat controversial. Makes several contacts with the 16S rRNA in the 70S ribosome. The protein is Large ribosomal subunit protein uL2 of Citrifermentans bemidjiense (strain ATCC BAA-1014 / DSM 16622 / JCM 12645 / Bem) (Geobacter bemidjiensis).